The following is a 332-amino-acid chain: Multiple virulence factor regulator MvfR (332 aa).

In terms of domain architecture, HTH lysR-type spans 4-61 (HNLNHVNMFLQVIASGSISSAARILRKSHTAVSSAVSNLEIDLCVELVRRDGYKVEPT). A DNA-binding region (H-T-H motif) is located at residues 21-40 (ISSAARILRKSHTAVSSAVS).

It belongs to the LysR transcriptional regulatory family. Forms homooligomers.

The protein resides in the cell inner membrane. It localises to the secreted. Its activity is regulated as follows. Both 3,4-dihydroxy-2-heptylquinoline (PQS) and its precursor 4-hydroxy-2-heptylquinoline (HHQ) function as ligands and promote MvfR DNA-binding activity leading to transcriptional activation. Its function is as follows. Transcription regulator that plays a critical role in virulence by positively regulating the expression of multiple quorum sensing (QS)-regulated virulence factors, genes involved in protein secretion, translation, response to oxidative stress and the phnAB operon. At the stationary phase, negatively autoregulates its function through cleavage and translocation to the extracellular space. In Pseudomonas aeruginosa (strain ATCC 15692 / DSM 22644 / CIP 104116 / JCM 14847 / LMG 12228 / 1C / PRS 101 / PAO1), this protein is Multiple virulence factor regulator MvfR.